The sequence spans 299 residues: Bifunctional protein FolD (299 aa).

NADP(+) contacts are provided by residues 168–170 (GRS), serine 193, and isoleucine 234.

This sequence belongs to the tetrahydrofolate dehydrogenase/cyclohydrolase family. In terms of assembly, homodimer.

The catalysed reaction is (6R)-5,10-methylene-5,6,7,8-tetrahydrofolate + NADP(+) = (6R)-5,10-methenyltetrahydrofolate + NADPH. The enzyme catalyses (6R)-5,10-methenyltetrahydrofolate + H2O = (6R)-10-formyltetrahydrofolate + H(+). It participates in one-carbon metabolism; tetrahydrofolate interconversion. In terms of biological role, catalyzes the oxidation of 5,10-methylenetetrahydrofolate to 5,10-methenyltetrahydrofolate and then the hydrolysis of 5,10-methenyltetrahydrofolate to 10-formyltetrahydrofolate. The sequence is that of Bifunctional protein FolD from Bartonella henselae (strain ATCC 49882 / DSM 28221 / CCUG 30454 / Houston 1) (Rochalimaea henselae).